A 621-amino-acid chain; its full sequence is (-)-beta-phellandrene synthase 1, chloroplastic (621 aa).

The N-terminal 49 residues, 1-49 (MALALVSVAPLVSMRRSLFSSPYELKSIDKTIPNLVMCRKRMLGRPSIR), are a transit peptide targeting the chloroplast. Residues Asp372, Asp376, and Asp524 each contribute to the Mg(2+) site. A DDXXD motif motif is present at residues 372–376 (DDIYD).

The protein belongs to the terpene synthase family. Tpsd subfamily. Requires Mg(2+) as cofactor. Mn(2+) serves as cofactor.

The protein localises to the plastid. The protein resides in the chloroplast. It catalyses the reaction (2E)-geranyl diphosphate = (-)-beta-phellandrene + diphosphate. It functions in the pathway terpene metabolism; oleoresin biosynthesis. Its pathway is secondary metabolite biosynthesis; terpenoid biosynthesis. Functionally, monoterpene synthase (TPS) involved in the biosynthesis of monoterpene natural products included in conifer oleoresin secretions and volatile emissions; these compounds contribute to biotic and abiotic stress defense against herbivores and pathogens. Catalyzes the conversion of (2E)-geranyl diphosphate (GPP) to (-)-beta-phellandrene. The protein is (-)-beta-phellandrene synthase 1, chloroplastic of Pinus banksiana (Jack pine).